A 307-amino-acid chain; its full sequence is tRNA pseudouridine synthase B (307 aa).

Asp-38 functions as the Nucleophile in the catalytic mechanism.

It belongs to the pseudouridine synthase TruB family. Type 1 subfamily.

The catalysed reaction is uridine(55) in tRNA = pseudouridine(55) in tRNA. Functionally, responsible for synthesis of pseudouridine from uracil-55 in the psi GC loop of transfer RNAs. The sequence is that of tRNA pseudouridine synthase B from Bacillus cereus (strain ATCC 10987 / NRS 248).